The chain runs to 300 residues: Nucleotide-binding protein Dshi_0209 (300 aa).

An ATP-binding site is contributed by 20 to 27 (GPSGAGRT). Position 67-70 (67-70 (DART)) interacts with GTP.

This sequence belongs to the RapZ-like family.

In terms of biological role, displays ATPase and GTPase activities. The sequence is that of Nucleotide-binding protein Dshi_0209 from Dinoroseobacter shibae (strain DSM 16493 / NCIMB 14021 / DFL 12).